The primary structure comprises 301 residues: Acetylglutamate kinase (301 aa).

Substrate contacts are provided by residues Gly70–Gly71, Arg92, and Asn185.

Belongs to the acetylglutamate kinase family. ArgB subfamily.

The protein localises to the cytoplasm. The catalysed reaction is N-acetyl-L-glutamate + ATP = N-acetyl-L-glutamyl 5-phosphate + ADP. Its pathway is amino-acid biosynthesis; L-arginine biosynthesis; N(2)-acetyl-L-ornithine from L-glutamate: step 2/4. Its function is as follows. Catalyzes the ATP-dependent phosphorylation of N-acetyl-L-glutamate. This is Acetylglutamate kinase from Synechococcus elongatus (strain ATCC 33912 / PCC 7942 / FACHB-805) (Anacystis nidulans R2).